The following is a 135-amino-acid chain: Probable transporter XF_0766 (135 aa).

A run of 4 helical transmembrane segments spans residues 4 to 24 (YWYP…LLLL), 45 to 65 (AQDI…SVIF), 71 to 91 (VTVA…GLGT), and 114 to 134 (IVAT…MGVY).

Belongs to the TsuA/YedE (TC 9.B.102) family.

It is found in the cell inner membrane. In Xylella fastidiosa (strain 9a5c), this protein is Probable transporter XF_0766.